We begin with the raw amino-acid sequence, 475 residues long: Tryptophan synthase beta chain 2, chloroplastic (475 aa).

Over residues 1-21 the composition is skewed to polar residues; the sequence is MATASTAATFRPSSVSASSEL. The tract at residues 1–44 is disordered; that stretch reads MATASTAATFRPSSVSASSELTHLRSPSKLPKFTPLPSARSRSS. The N-terminal 51 residues, 1–51, are a transit peptide targeting the chloroplast; it reads MATASTAATFRPSSVSASSELTHLRSPSKLPKFTPLPSARSRSSSSFSVSC. Position 52 is an N-acetylthreonine (Thr-52). An N6-(pyridoxal phosphate)lysine modification is found at Lys-170.

This sequence belongs to the TrpB family. As to quaternary structure, tetramer of two alpha and two beta chains. The cofactor is pyridoxal 5'-phosphate.

It is found in the plastid. The protein localises to the chloroplast. It catalyses the reaction (1S,2R)-1-C-(indol-3-yl)glycerol 3-phosphate + L-serine = D-glyceraldehyde 3-phosphate + L-tryptophan + H2O. It functions in the pathway amino-acid biosynthesis; L-tryptophan biosynthesis; L-tryptophan from chorismate: step 5/5. Functionally, the beta subunit is responsible for the synthesis of L-tryptophan from indole and L-serine. This is Tryptophan synthase beta chain 2, chloroplastic (TSB2) from Arabidopsis thaliana (Mouse-ear cress).